A 248-amino-acid chain; its full sequence is Metallo-beta-lactamase type 2 (248 aa).

The first 21 residues, 1–21, serve as a signal peptide directing secretion; the sequence is MKGLKGLLVLALGFTGLQVFG. H97, H99, D101, H160, and C179 together coordinate Zn(2+). K182 is a binding site for substrate. H221 is a Zn(2+) binding site.

This sequence belongs to the metallo-beta-lactamase superfamily. Class-B beta-lactamase family. In terms of assembly, monomer. Zn(2+) is required as a cofactor.

The protein resides in the periplasm. The enzyme catalyses a beta-lactam + H2O = a substituted beta-amino acid. Functionally, confers resistance to the different beta-lactams antibiotics (penicillin, cephalosporin and carbapenem) via the hydrolysis of the beta-lactam ring. In Elizabethkingia meningoseptica (Chryseobacterium meningosepticum), this protein is Metallo-beta-lactamase type 2 (blaB7).